The sequence spans 156 residues: Ribosomal RNA large subunit methyltransferase H (156 aa).

Residues Leu-72, Gly-104, and 123–128 each bind S-adenosyl-L-methionine; that span reads LSKMTL.

It belongs to the RNA methyltransferase RlmH family. In terms of assembly, homodimer.

Its subcellular location is the cytoplasm. The catalysed reaction is pseudouridine(1915) in 23S rRNA + S-adenosyl-L-methionine = N(3)-methylpseudouridine(1915) in 23S rRNA + S-adenosyl-L-homocysteine + H(+). Specifically methylates the pseudouridine at position 1915 (m3Psi1915) in 23S rRNA. The sequence is that of Ribosomal RNA large subunit methyltransferase H from Maridesulfovibrio salexigens (strain ATCC 14822 / DSM 2638 / NCIMB 8403 / VKM B-1763) (Desulfovibrio salexigens).